The sequence spans 474 residues: 6-phospho-beta-glucosidase AscB (474 aa).

Glu180 serves as the catalytic Proton donor. Glu372 acts as the Nucleophile in catalysis.

It belongs to the glycosyl hydrolase 1 family.

The enzyme catalyses 6-phospho-beta-D-glucosyl-(1-&gt;4)-D-glucose + H2O = D-glucose 6-phosphate + D-glucose. Functionally, can hydrolyze salicin, cellobiose, and probably arbutin. In Escherichia coli (strain K12), this protein is 6-phospho-beta-glucosidase AscB (ascB).